Consider the following 36-residue polypeptide: Photosystem II reaction center protein M (36 aa).

The chain crosses the membrane as a helical span at residues 5 to 25; that stretch reads ILGVIATALFIIIPTSFLLIL.

The protein belongs to the PsbM family. PSII is composed of 1 copy each of membrane proteins PsbA, PsbB, PsbC, PsbD, PsbE, PsbF, PsbH, PsbI, PsbJ, PsbK, PsbL, PsbM, PsbT, PsbX, PsbY, PsbZ, Psb30/Ycf12, at least 3 peripheral proteins of the oxygen-evolving complex and a large number of cofactors. It forms dimeric complexes.

The protein resides in the plastid. It localises to the chloroplast thylakoid membrane. Functionally, one of the components of the core complex of photosystem II (PSII). PSII is a light-driven water:plastoquinone oxidoreductase that uses light energy to abstract electrons from H(2)O, generating O(2) and a proton gradient subsequently used for ATP formation. It consists of a core antenna complex that captures photons, and an electron transfer chain that converts photonic excitation into a charge separation. This subunit is found at the monomer-monomer interface. The chain is Photosystem II reaction center protein M from Chlorella vulgaris (Green alga).